A 1007-amino-acid polypeptide reads, in one-letter code: uncharacterized protein (1007 aa).

Positions 1–51 (MTTPISNSPSSIPTVTVSTTTASSGSLGTSTVSSTTTSTSVAQTATTTSSA) are cleaved as a signal peptide. Positions 1 to 96 (MTTPISNSPS…SATANKTSSA (96 aa)) are enriched in low complexity. Disordered regions lie at residues 1 to 186 (MTTP…GNPI), 200 to 224 (TYTT…MSLP), 387 to 533 (NWGS…GPDI), 543 to 562 (TVYP…ANQN), 578 to 645 (ETII…GPDI), 655 to 674 (TVYP…ANQN), and 712 to 757 (DLED…GPDI). Over residues 118-163 (DGEVSSNYDDVDTPTNSSDSTVDSDYQDVETQYKTISNNGENTYET) the composition is skewed to polar residues. Positions 167–176 (HGEKNTHVQE) are enriched in basic and acidic residues. Polar residues-rich tracts occupy residues 177 to 186 (SHASGTGNPI) and 200 to 210 (TYTTSPRNENI). A compositionally biased stretch (low complexity) spans 423–442 (VINVNVNVGGTNVNIGDTNV). Polar residues predominate over residues 443 to 453 (SKGSGTPTSSQ). Residues 469–491 (IDTNNQTNGDINTNDNSNNVDGS) show a composition bias toward low complexity. The span at 507-523 (DTESTNGNDSGKTTSTE) shows a compositional bias: polar residues. Positions 597–618 (ADADVEDTSDTDSGIGDDDGVS) are enriched in acidic residues. Low complexity predominate over residues 619-635 (DTESTNGNNSGKTTSTE). Residues 712–730 (DLEDVSDADSGFGDDDGIS) show a composition bias toward acidic residues. The segment covering 732–743 (TESTNGNDSGKN) has biased composition (polar residues).

The protein belongs to the chlamydial CPn_0572/CT_456/TC_0741 family.

This is an uncharacterized protein from Chlamydia muridarum (strain MoPn / Nigg).